The sequence spans 191 residues: Photosystem I assembly protein Ycf4 (191 aa).

Transmembrane regions (helical) follow at residues 34–54 and 68–88; these read VASM…SSYF and IFVP…LLAI.

Belongs to the Ycf4 family.

Its subcellular location is the cellular thylakoid membrane. Seems to be required for the assembly of the photosystem I complex. The sequence is that of Photosystem I assembly protein Ycf4 from Prochlorococcus marinus (strain NATL1A).